The following is a 271-amino-acid chain: Mannosyl-3-phosphoglycerate phosphatase (271 aa).

The Nucleophile role is filled by Asp-13. Residues Asp-13, Asp-15, and Asp-214 each coordinate Mg(2+).

The protein belongs to the HAD-like hydrolase superfamily. MPGP family. The cofactor is Mg(2+).

Its subcellular location is the cytoplasm. It catalyses the reaction 2-O-(alpha-D-mannosyl)-3-phosphoglycerate + H2O = (2R)-2-O-(alpha-D-mannosyl)-glycerate + phosphate. In Salmonella choleraesuis (strain SC-B67), this protein is Mannosyl-3-phosphoglycerate phosphatase (yedP).